A 402-amino-acid polypeptide reads, in one-letter code: Phosphomevalonate dehydratase large subunit (402 aa).

Residues G48, A49, S50, N79, and P80 each coordinate (R)-5-phosphomevalonate. Position 122 (C122) interacts with [4Fe-4S] cluster. Residues E145 and S146 each coordinate (R)-5-phosphomevalonate. Residues C297 and C356 each coordinate [4Fe-4S] cluster. K377 lines the (R)-5-phosphomevalonate pocket.

The protein belongs to the AcnX type II large subunit family. Heterodimer composed of a large subunit (PMDh-L) and a small subunit (PMDh-S). [4Fe-4S] cluster is required as a cofactor.

It carries out the reaction (R)-5-phosphomevalonate = (2E)-3-methyl-5-phosphooxypent-2-enoate + H2O. It participates in isoprenoid biosynthesis; isopentenyl diphosphate biosynthesis via mevalonate pathway. With respect to regulation, neither the addition of 1 mM Mg(2+) nor 1 mM Mn(2+) has a significant effect on the activity, whereas Zn(2+) causes almost complete inactivation. Strongly inhibited by H(2)O(2), but not by EDTA or iodoacetamide. Functionally, component of a hydro-lyase that catalyzes the dehydration of mevalonate 5-phosphate (MVA5P) to form trans-anhydromevalonate 5-phosphate (tAHMP). Involved in the archaeal mevalonate (MVA) pathway, which provides fundamental precursors for isoprenoid biosynthesis, such as isopentenyl diphosphate (IPP) and dimethylallyl diphosphate (DMAPP). In Aeropyrum pernix (strain ATCC 700893 / DSM 11879 / JCM 9820 / NBRC 100138 / K1), this protein is Phosphomevalonate dehydratase large subunit.